A 4568-amino-acid chain; its full sequence is Dynein heavy chain, cytoplasmic (4568 aa).

Positions 1-1826 are stem; it reads MDSGNESSII…VVKMANSQFF (1826 aa). 5 coiled-coil regions span residues 587 to 652, 814 to 844, 1241 to 1274, 1324 to 1340, and 1559 to 1591; these read QTRL…VLGK, KLAETVNTYQERCEELLNVVRIVNADLNVLK, QEALNVITAFEAKLNKLTEERNKMRKARVALDLS, RKIRQSLDELMNQLKQL, and VNMQGAQRLLERLADMLAKIQKALGEYLERERS. 4 AAA regions span residues 1827 to 2049, 2118 to 2394, 2498 to 2747, and 2842 to 3111; these read YGFE…VLVS, QQLS…PTPQ, EIES…WVRG, and GFYE…GHRV. ATP contacts are provided by residues 1865 to 1872, 2163 to 2170, 2537 to 2544, and 2880 to 2887; these read GPAGTGKT, GSSGSGKT, GPPGSGKT, and GTAGAGKT. Coiled-coil stretches lie at residues 3132 to 3229, 3339 to 3432, and 3707 to 3739; these read EKRS…AQVE, ARAQ…RDRW, and NSVIETLEKLKNEAAEVAQKSAETDKVMAEVDA. Residues 3132–3432 are stalk; the sequence is EKRSDLEEEK…SSLRSERDRW (301 aa). AAA regions lie at residues 3496 to 3725 and 3954 to 4169; these read LSTV…EVAQ and AHRV…TLDA. Positions 4359 to 4386 form a coiled coil; it reads QLLKDIRRDLNEISAVCRAEKKQNNETR.

The protein belongs to the dynein heavy chain family. As to quaternary structure, consists of at least two heavy chains and a number of intermediate and light chains.

Its subcellular location is the cytoplasm. It is found in the cytoskeleton. Functionally, cytoplasmic dynein acts as a motor for the intracellular retrograde motility of vesicles and organelles along microtubules. Dynein has ATPase activity; the force-producing power stroke is thought to occur on release of ADP. May play a role in nuclear migration in hypodermal precursor cells. May be involved in the transport of synaptic vesicle components towards the axon of the DA motor neuron. This function may involve the regulation of dynein by pct-1 and/or cdk-5. Involved in the formation of synapses in the dorsal region during synaptic remodeling of DD motor neurons. Required for anterograde trafficking of dense-core vesicles in the DB motor neuron dendrites. Required for the formation of dendritic branches of PVD sensory neurons. May also play a role in GABAergic synaptic vesicle localization in the ventral nerve cord. May play a role in the pairing of homologous chromosomes during meiosis. This Caenorhabditis elegans protein is Dynein heavy chain, cytoplasmic.